The chain runs to 472 residues: Probable glycine dehydrogenase (decarboxylating) subunit 2 (472 aa).

K268 carries the N6-(pyridoxal phosphate)lysine modification.

This sequence belongs to the GcvP family. C-terminal subunit subfamily. As to quaternary structure, the glycine cleavage system is composed of four proteins: P, T, L and H. In this organism, the P 'protein' is a heterodimer of two subunits. Pyridoxal 5'-phosphate serves as cofactor.

It catalyses the reaction N(6)-[(R)-lipoyl]-L-lysyl-[glycine-cleavage complex H protein] + glycine + H(+) = N(6)-[(R)-S(8)-aminomethyldihydrolipoyl]-L-lysyl-[glycine-cleavage complex H protein] + CO2. Its function is as follows. The glycine cleavage system catalyzes the degradation of glycine. The P protein binds the alpha-amino group of glycine through its pyridoxal phosphate cofactor; CO(2) is released and the remaining methylamine moiety is then transferred to the lipoamide cofactor of the H protein. This Thermoplasma acidophilum (strain ATCC 25905 / DSM 1728 / JCM 9062 / NBRC 15155 / AMRC-C165) protein is Probable glycine dehydrogenase (decarboxylating) subunit 2.